We begin with the raw amino-acid sequence, 475 residues long: Protein translocase subunit SecD (475 aa).

6 helical membrane-spanning segments follow: residues 7 to 27 (LLIT…SLKF), 313 to 333 (KGFM…FIYY), 338 to 358 (LIAD…MAYL), 364 to 384 (LPGV…NVLI), 410 to 430 (FWTI…LFQF), and 437 to 457 (GFAV…VTVT).

Belongs to the SecD/SecF family. SecD subfamily. Forms a complex with SecF. Part of the essential Sec protein translocation apparatus which comprises SecA, SecYEG and auxiliary proteins SecDF. Other proteins may also be involved.

Its subcellular location is the cell inner membrane. Part of the Sec protein translocase complex. Interacts with the SecYEG preprotein conducting channel. SecDF uses the proton motive force (PMF) to complete protein translocation after the ATP-dependent function of SecA. The chain is Protein translocase subunit SecD from Endomicrobium trichonymphae.